A 77-amino-acid chain; its full sequence is Acyl carrier protein (77 aa).

A Carrier domain is found at 1–76 (MATFDDVKAV…DVVNYIDNLK (76 aa)). At Ser36 the chain carries O-(pantetheine 4'-phosphoryl)serine.

The protein belongs to the acyl carrier protein (ACP) family. 4'-phosphopantetheine is transferred from CoA to a specific serine of apo-ACP by AcpS. This modification is essential for activity because fatty acids are bound in thioester linkage to the sulfhydryl of the prosthetic group.

Its subcellular location is the cytoplasm. It functions in the pathway lipid metabolism; fatty acid biosynthesis. Its function is as follows. Carrier of the growing fatty acid chain in fatty acid biosynthesis. This chain is Acyl carrier protein, found in Campylobacter jejuni (strain RM1221).